Reading from the N-terminus, the 86-residue chain is MDAFDVIKAPVVTEKTVRMIEEENKLVFYVDRRATKQDIKRAMKELFDVEVEKVNTLITPKGEKKAYVKLKEGYDASKIAASLGIY.

The protein belongs to the universal ribosomal protein uL23 family. Part of the 50S ribosomal subunit. Contacts protein L29.

Functionally, binds to 23S rRNA. One of the proteins that surrounds the polypeptide exit tunnel on the outside of the ribosome. This chain is Large ribosomal subunit protein uL23, found in Methanocaldococcus jannaschii (strain ATCC 43067 / DSM 2661 / JAL-1 / JCM 10045 / NBRC 100440) (Methanococcus jannaschii).